The following is a 259-amino-acid chain: 3-deoxy-manno-octulosonate cytidylyltransferase (259 aa).

This sequence belongs to the KdsB family.

It is found in the cytoplasm. It carries out the reaction 3-deoxy-alpha-D-manno-oct-2-ulosonate + CTP = CMP-3-deoxy-beta-D-manno-octulosonate + diphosphate. The protein operates within nucleotide-sugar biosynthesis; CMP-3-deoxy-D-manno-octulosonate biosynthesis; CMP-3-deoxy-D-manno-octulosonate from 3-deoxy-D-manno-octulosonate and CTP: step 1/1. It participates in bacterial outer membrane biogenesis; lipopolysaccharide biosynthesis. Activates KDO (a required 8-carbon sugar) for incorporation into bacterial lipopolysaccharide in Gram-negative bacteria. The polypeptide is 3-deoxy-manno-octulosonate cytidylyltransferase (Maricaulis maris (strain MCS10) (Caulobacter maris)).